The following is a 371-amino-acid chain: Chaperone protein DnaJ (371 aa).

The J domain occupies 5 to 69 (DYYEVLGLSK…QKRAQYDQFG (65 aa)). The CR-type zinc-finger motif lies at 133 to 215 (GKELNVEIPV…CHGSGKVRKR (83 aa)). Zn(2+) is bound by residues cysteine 146, cysteine 149, cysteine 163, cysteine 166, cysteine 189, cysteine 192, cysteine 203, and cysteine 206. 4 CXXCXGXG motif repeats span residues 146 to 153 (CDTCKGSG), 163 to 170 (CKHCSGSG), 189 to 196 (CSHCSGTG), and 203 to 210 (CTTCHGSG).

This sequence belongs to the DnaJ family. Homodimer. Requires Zn(2+) as cofactor.

It localises to the cytoplasm. In terms of biological role, participates actively in the response to hyperosmotic and heat shock by preventing the aggregation of stress-denatured proteins and by disaggregating proteins, also in an autonomous, DnaK-independent fashion. Unfolded proteins bind initially to DnaJ; upon interaction with the DnaJ-bound protein, DnaK hydrolyzes its bound ATP, resulting in the formation of a stable complex. GrpE releases ADP from DnaK; ATP binding to DnaK triggers the release of the substrate protein, thus completing the reaction cycle. Several rounds of ATP-dependent interactions between DnaJ, DnaK and GrpE are required for fully efficient folding. Also involved, together with DnaK and GrpE, in the DNA replication of plasmids through activation of initiation proteins. The chain is Chaperone protein DnaJ from Bacillus cereus (strain AH820).